The following is a 201-amino-acid chain: Regulator of G-protein signaling 1 (201 aa).

One can recognise an RGS domain in the interval Ser-75–Ala-191.

It localises to the cell membrane. The protein resides in the cytoplasm. Its subcellular location is the cytosol. Regulates G protein-coupled receptor signaling cascades, including signaling downstream of the N-formylpeptide chemoattractant receptors and leukotriene receptors. Inhibits B cell chemotaxis. Inhibits signal transduction by increasing the GTPase activity of G protein alpha subunits, thereby driving them into their inactive GDP-bound form. This chain is Regulator of G-protein signaling 1 (rgs1), found in Xenopus laevis (African clawed frog).